The chain runs to 277 residues: Type II restriction enzyme RsrI (277 aa).

Belongs to the EcoRI type II restriction endonuclease family. As to quaternary structure, homodimer. It depends on Mg(2+) as a cofactor.

It catalyses the reaction Endonucleolytic cleavage of DNA to give specific double-stranded fragments with terminal 5'-phosphates.. In terms of biological role, a P subtype restriction enzyme that recognizes the double-stranded sequence 5'-GAATTC-3' and cleaves after G-1. The polypeptide is Type II restriction enzyme RsrI (rsrIR) (Cereibacter sphaeroides (Rhodobacter sphaeroides)).